Reading from the N-terminus, the 272-residue chain is NH(3)-dependent NAD(+) synthetase (272 aa).

45 to 52 (GISGGQDS) provides a ligand contact to ATP. Asp51 contacts Mg(2+). Arg138 lines the deamido-NAD(+) pocket. Thr158 lines the ATP pocket. Glu163 is a Mg(2+) binding site. Positions 171 and 178 each coordinate deamido-NAD(+). Residues Lys187 and Thr209 each contribute to the ATP site. 258-259 (HK) is a deamido-NAD(+) binding site.

Belongs to the NAD synthetase family. Homodimer.

It carries out the reaction deamido-NAD(+) + NH4(+) + ATP = AMP + diphosphate + NAD(+) + H(+). Its pathway is cofactor biosynthesis; NAD(+) biosynthesis; NAD(+) from deamido-NAD(+) (ammonia route): step 1/1. In terms of biological role, catalyzes the ATP-dependent amidation of deamido-NAD to form NAD. Uses ammonia as a nitrogen source. This is NH(3)-dependent NAD(+) synthetase from Bacillus cereus (strain AH187).